Consider the following 317-residue polypeptide: Acetyl-coenzyme A carboxylase carboxyl transferase subunit alpha (317 aa).

Residues 31 to 292 (RFEPELAQLE…DKALWATLTS (262 aa)) enclose the CoA carboxyltransferase C-terminal domain.

It belongs to the AccA family. In terms of assembly, acetyl-CoA carboxylase is a heterohexamer composed of biotin carboxyl carrier protein (AccB), biotin carboxylase (AccC) and two subunits each of ACCase subunit alpha (AccA) and ACCase subunit beta (AccD).

The protein localises to the cytoplasm. The catalysed reaction is N(6)-carboxybiotinyl-L-lysyl-[protein] + acetyl-CoA = N(6)-biotinyl-L-lysyl-[protein] + malonyl-CoA. It functions in the pathway lipid metabolism; malonyl-CoA biosynthesis; malonyl-CoA from acetyl-CoA: step 1/1. Component of the acetyl coenzyme A carboxylase (ACC) complex. First, biotin carboxylase catalyzes the carboxylation of biotin on its carrier protein (BCCP) and then the CO(2) group is transferred by the carboxyltransferase to acetyl-CoA to form malonyl-CoA. The chain is Acetyl-coenzyme A carboxylase carboxyl transferase subunit alpha from Sorangium cellulosum (strain So ce56) (Polyangium cellulosum (strain So ce56)).